The following is a 1035-amino-acid chain: Protein hir-1 (1035 aa).

WD repeat units lie at residues 15 to 54 (QKDF…NSHD), 68 to 107 (HHLG…PSHT), 129 to 168 (GHDN…KLKT), 171 to 210 (VHQS…PNAT), 232 to 275 (PLTT…SEIN), 299 to 338 (DENS…PVLI), and 342 to 383 (IASK…WVAK). The interval 393–479 (KYGGSRKGMG…PEEESADKTA (87 aa)) is disordered. Residues 408–425 (DGLHLENHSKEKELRGAE) show a composition bias toward basic and acidic residues.

This sequence belongs to the WD repeat HIR1 family.

Its subcellular location is the nucleus. In terms of biological role, required for replication-independent chromatin assembly and for the periodic repression of histone gene transcription during the cell cycle. The polypeptide is Protein hir-1 (hir-1) (Neurospora crassa (strain ATCC 24698 / 74-OR23-1A / CBS 708.71 / DSM 1257 / FGSC 987)).